A 258-amino-acid chain; its full sequence is ATP synthase subunit a (258 aa).

6 helical membrane-spanning segments follow: residues 30 to 50 (SSYFMVLTTVLTIVLFMVAMS), 85 to 105 (FFPFVFTLFIFILVANMLGMF), 122 to 142 (LIVTVALAMLVWLTVIIYGVF), 151 to 171 (LFVPSGVPIFVLPLVVVIEII), 198 to 218 (FAGFVVTLAAAWGGFGYLAGI), and 230 to 250 (LEFLVAFLQAYVFAMLTCIYL).

Belongs to the ATPase A chain family. As to quaternary structure, F-type ATPases have 2 components, CF(1) - the catalytic core - and CF(0) - the membrane proton channel. CF(1) has five subunits: alpha(3), beta(3), gamma(1), delta(1), epsilon(1). CF(0) has three main subunits: a(1), b(2) and c(9-12). The alpha and beta chains form an alternating ring which encloses part of the gamma chain. CF(1) is attached to CF(0) by a central stalk formed by the gamma and epsilon chains, while a peripheral stalk is formed by the delta and b chains.

It is found in the cell inner membrane. Its function is as follows. Key component of the proton channel; it plays a direct role in the translocation of protons across the membrane. This chain is ATP synthase subunit a, found in Maricaulis maris (strain MCS10) (Caulobacter maris).